The following is a 196-amino-acid chain: Ribosomal RNA large subunit methyltransferase E (196 aa).

S-adenosyl-L-methionine-binding residues include Gly50, Trp52, Asp70, Asp87, and Asp112. Lys152 functions as the Proton acceptor in the catalytic mechanism.

It belongs to the class I-like SAM-binding methyltransferase superfamily. RNA methyltransferase RlmE family.

It localises to the cytoplasm. The catalysed reaction is uridine(2552) in 23S rRNA + S-adenosyl-L-methionine = 2'-O-methyluridine(2552) in 23S rRNA + S-adenosyl-L-homocysteine + H(+). In terms of biological role, specifically methylates the uridine in position 2552 of 23S rRNA at the 2'-O position of the ribose in the fully assembled 50S ribosomal subunit. The polypeptide is Ribosomal RNA large subunit methyltransferase E (Bdellovibrio bacteriovorus (strain ATCC 15356 / DSM 50701 / NCIMB 9529 / HD100)).